The chain runs to 210 residues: dTTP/UTP pyrophosphatase (210 aa).

Asp89 (proton acceptor) is an active-site residue.

This sequence belongs to the Maf family. YhdE subfamily. A divalent metal cation serves as cofactor.

Its subcellular location is the cytoplasm. It catalyses the reaction dTTP + H2O = dTMP + diphosphate + H(+). The enzyme catalyses UTP + H2O = UMP + diphosphate + H(+). Functionally, nucleoside triphosphate pyrophosphatase that hydrolyzes dTTP and UTP. May have a dual role in cell division arrest and in preventing the incorporation of modified nucleotides into cellular nucleic acids. This Burkholderia orbicola (strain AU 1054) protein is dTTP/UTP pyrophosphatase.